The chain runs to 491 residues: Pre-glycoprotein polyprotein GP complex (491 aa).

Gly2 carries the N-myristoyl glycine; by host lipid modification. The Extracellular portion of the chain corresponds to 2–17 (GQIVTFFQEVPHVIEE). A helical transmembrane segment spans residues 18–33 (VMNIVLIALSVLAVLK). Topologically, residues 34-58 (GLYNFATCGLVGLVTFLLLCGRSCT) are cytoplasmic. Cys57 serves as a coordination point for Zn(2+). The Extracellular segment spans residues 59-432 (TSLYKGVYEL…QGKTPLGLVD (374 aa)). N-linked (GlcNAc...) asparagine; by host glycosylation is found at Asn79, Asn89, Asn99, Asn109, Asn119, and Asn167. 6 disulfides stabilise this stretch: Cys86/Cys231, Cys118/Cys155, Cys180/Cys212, Cys279/Cys292, Cys301/Cys310, and Cys364/Cys385. A glycan (N-linked (GlcNAc...) asparagine; by host) is linked at Asn224. Asn365, Asn373, Asn390, and Asn395 each carry an N-linked (GlcNAc...) asparagine; by host glycan. Residues 433–453 (LFVFSTSFYLISIFLHLVKIP) traverse the membrane as a helical segment. At 454 to 491 (THRHIVGKSCPKPHRLNHMGICSCGLYKQPGVPVKWKR) the chain is on the cytoplasmic side. Residues His455, His457, Cys463, His467, Cys475, and Cys477 each contribute to the Zn(2+) site.

It belongs to the arenaviridae GPC protein family. Interacts with glycoprotein G2. Part of the GP complex (GP-C) together with glycoprotein G1 and glycoprotein G2. The GP-complex interacts with protein Z, which interacts with ribonucleocapsid; these interactions may induce virion budding. In terms of assembly, homotrimer; disulfide-linked. In pre-fusion state, G1 homotrimers bind G2 homotrimers via ionic interactions. Part of the GP complex (GP-C) together with glycoprotein G2 and the stable signal peptide. Interacts with the primary host receptor DAG1 on the cell surface; this interaction occurs at pH 8.0 but not at pH 6.0 and below. Upon virus internalization and at endosomal pH, interacts with the host lysosomal protein LAMP1; this interaction mediates G1 dissociation from GP-C and membrane fusion. The GP-complex interacts with protein Z, which interacts with ribonucleocapsid; these interactions may induce virion budding. As to quaternary structure, homotrimer. Interacts with the stable signal peptide. In pre-fusion state, G2 homotrimers bind G1 homotrimers via ionic interactions. Part of the GP complex (GP-C) together with glycoprotein G1 and the stable signal peptide. Acidification in the endosome triggers rearrangements, which ultimately leads to a 6 helix bundle formed by the two heptad repeat domains (HR1 and HR2) in post-fusion state. The GP-complex interacts with protein Z, which interacts with ribonucleocapsid; these interactions may induce virion budding. Post-translationally, specific enzymatic cleavages in vivo yield mature proteins. GP-C polyprotein is cleaved in the endoplasmic reticulum by the host protease MBTPS1. Only cleaved glycoprotein is incorporated into virions. The SSP remains stably associated with the GP complex following cleavage by signal peptidase and plays crucial roles in the trafficking of GP through the secretory pathway. In terms of processing, myristoylation is necessary for GP2-mediated fusion activity.

The protein localises to the virion membrane. It localises to the host endoplasmic reticulum membrane. The protein resides in the host Golgi apparatus membrane. It is found in the host cell membrane. In terms of biological role, functions as a cleaved signal peptide that is retained as the third component of the GP complex (GP-C). Helps to stabilize the spike complex in its native conformation. The SSP is required for efficient glycoprotein expression, post-translational maturation cleavage of G1 and G2, glycoprotein transport to the cell surface plasma membrane, formation of infectious virus particles, and acid pH-dependent glycoprotein-mediated cell fusion. Forms the virion spikes together with glycoprotein G2. The glycoprotein spike trimers are connected to the underlying matrix. Interacts with the host receptor. Mediates virus attachment to the host primary receptor alpha-dystroglycan DAG1 (alpha-DG) at the cell surface. This attachment induces virion internalization apparently through macropinocytosis. Following endocytosis, there is a pH-dependent switch from binding DAG1 to the host lysosomal receptor LAMP1. This latter binding triggers the dissociation of GP1, exposing the fusion subunit, GP2, such that fusion can occur. Down-modulates host DAG1. Its function is as follows. Forms the virion spikes together with glycoprotein G1. The glycoprotein spike trimers are connected to the underlying matrix. Class I viral fusion protein that directs fusion of viral and host endosomal membranes, leading to delivery of the nucleocapsid into the cytoplasm. Membrane fusion is mediated by irreversible conformational changes induced by acidification. This Homo sapiens (Human) protein is Pre-glycoprotein polyprotein GP complex.